Consider the following 861-residue polypeptide: Homeobox-leucine zipper protein HOX29 (861 aa).

Residues 2–65 (DASKYVRYTP…NRRCREKQRK (64 aa)) constitute a DNA-binding region (homeobox). A coiled-coil region spans residues 57–99 (RRCREKQRKESSRLQALNRKLTAMNKLLMEENDRLQKQVSQLV). One can recognise an START domain in the interval 162-390 (RDASPAGLMS…VAHEDTRSVI (229 aa)).

It belongs to the HD-ZIP homeobox family. Class III subfamily. As to expression, expressed in roots, stems and leaf blades.

The protein localises to the nucleus. Probable transcription factor. This Oryza sativa subsp. indica (Rice) protein is Homeobox-leucine zipper protein HOX29 (HOX29).